A 152-amino-acid chain; its full sequence is Transcriptional repressor NrdR (152 aa).

A zinc finger spans residues 3-34 (CPHCHHNGSRVIDSRPAEDGMSIRRRRECVNC). The region spanning 49–139 (LLVVKKDGTR…VYRQFKDVDA (91 aa)) is the ATP-cone domain.

Belongs to the NrdR family. Zn(2+) is required as a cofactor.

Negatively regulates transcription of bacterial ribonucleotide reductase nrd genes and operons by binding to NrdR-boxes. This Limosilactobacillus fermentum (strain NBRC 3956 / LMG 18251) (Lactobacillus fermentum) protein is Transcriptional repressor NrdR.